A 441-amino-acid polypeptide reads, in one-letter code: Cytochrome P450 monooxygenase cpsC (441 aa).

Residues 175 to 195 (STTSQARKDETTATQQAGMEQ) form a disordered region. Positions 186–195 (TATQQAGMEQ) are enriched in polar residues. Cys-377 is a binding site for heme.

This sequence belongs to the cytochrome P450 family. It depends on heme as a cofactor.

It catalyses the reaction campesine D + reduced [NADPH--hemoprotein reductase] + O2 = campesine G + oxidized [NADPH--hemoprotein reductase] + 2 H2O + H(+). The protein operates within alkaloid biosynthesis. In terms of biological role, cytochrome P450 monooxygenase; part of the gene cluster that mediates the biosynthesis of campesine G, a dimeric indole piperazine alkaloid that shows good insecticidal activity Galleria mellonella. Within the pathway, cpsC catalyzes regioselective dehydrogenation reaction towards C2-N1 of the (2H)-indole ring of campesine D to yield the final product, campesine G. The non-canonical non-ribosomal peptide synthetase cpsA catalyzes the first steps of the pathway by producing L-tryptophanal and L-valinal from their respective amino-acids. These products condensate spontaneously to form trypyl-valyl pyrazine also known as didehydrocampesine A. The NmrA-like family domain-containing oxidoreductase cpsB is the next enzyme in cps pathway and reduces the unstable didehydrocampesine A to campesine A. The methyltransferase cpsF and the acetyltransferase cpsE both recognize N13 of piperazine ring to carry out methylation and acetylation of campesine A to produce campesine C and B, respectively. The cytochrome P450 monooxygenase cpsD then acts as a dimerase that catalyzes oxidative heterocoupling between campesine B and C to produce heterodimers with unexpected 6/5/6/6/6/6/5/6 eight-ring scaffold called campesine D. Finally,the cytochrome P450 monooxygenase cpsC is a regioselective dehydrogenase that catalyzes dehydrogenation reaction towards C2-N1 to produce campesine G. The sequence is that of Cytochrome P450 monooxygenase cpsC from Aspergillus campestris (strain IBT 28561).